The primary structure comprises 446 residues: tRNA modification GTPase MnmE (446 aa).

Positions 22, 80, and 119 each coordinate (6S)-5-formyl-5,6,7,8-tetrahydrofolate. Residues 215–370 form the TrmE-type G domain; the sequence is GLSLVIAGRP…LKKVIKQVVG (156 aa). N225 provides a ligand contact to K(+). Residues 225–230, 244–250, and 269–272 contribute to the GTP site; these read NAGKST, TEIAGTT, and DTAG. S229 lines the Mg(2+) pocket. Residues T244, I246, and T249 each coordinate K(+). T250 contributes to the Mg(2+) binding site. Residue K446 coordinates (6S)-5-formyl-5,6,7,8-tetrahydrofolate.

Belongs to the TRAFAC class TrmE-Era-EngA-EngB-Septin-like GTPase superfamily. TrmE GTPase family. Homodimer. Heterotetramer of two MnmE and two MnmG subunits. Requires K(+) as cofactor.

It localises to the cytoplasm. Exhibits a very high intrinsic GTPase hydrolysis rate. Involved in the addition of a carboxymethylaminomethyl (cmnm) group at the wobble position (U34) of certain tRNAs, forming tRNA-cmnm(5)s(2)U34. In Legionella pneumophila subsp. pneumophila (strain Philadelphia 1 / ATCC 33152 / DSM 7513), this protein is tRNA modification GTPase MnmE.